We begin with the raw amino-acid sequence, 557 residues long: Dihydroxy-acid dehydratase 2 (557 aa).

Cys-50 serves as a coordination point for [2Fe-2S] cluster. Asp-82 contacts Mg(2+). Cys-123 is a binding site for [2Fe-2S] cluster. Mg(2+) contacts are provided by Asp-124 and Lys-125. Lys-125 carries the N6-carboxylysine modification. A [2Fe-2S] cluster-binding site is contributed by Cys-195. Glu-447 provides a ligand contact to Mg(2+). Ser-473 functions as the Proton acceptor in the catalytic mechanism.

The protein belongs to the IlvD/Edd family. As to quaternary structure, homodimer. It depends on [2Fe-2S] cluster as a cofactor. The cofactor is Mg(2+).

It carries out the reaction (2R)-2,3-dihydroxy-3-methylbutanoate = 3-methyl-2-oxobutanoate + H2O. It catalyses the reaction (2R,3R)-2,3-dihydroxy-3-methylpentanoate = (S)-3-methyl-2-oxopentanoate + H2O. Its pathway is amino-acid biosynthesis; L-isoleucine biosynthesis; L-isoleucine from 2-oxobutanoate: step 3/4. It functions in the pathway amino-acid biosynthesis; L-valine biosynthesis; L-valine from pyruvate: step 3/4. Functionally, functions in the biosynthesis of branched-chain amino acids. Catalyzes the dehydration of (2R,3R)-2,3-dihydroxy-3-methylpentanoate (2,3-dihydroxy-3-methylvalerate) into 2-oxo-3-methylpentanoate (2-oxo-3-methylvalerate) and of (2R)-2,3-dihydroxy-3-methylbutanoate (2,3-dihydroxyisovalerate) into 2-oxo-3-methylbutanoate (2-oxoisovalerate), the penultimate precursor to L-isoleucine and L-valine, respectively. This is Dihydroxy-acid dehydratase 2 from Burkholderia lata (strain ATCC 17760 / DSM 23089 / LMG 22485 / NCIMB 9086 / R18194 / 383).